The chain runs to 180 residues: Der GTPase-activating protein YihI (180 aa).

2 disordered regions span residues methionine 1–glutamine 87 and glycine 142–glycine 180. Residues asparagine 23 to arginine 32 are compositionally biased toward basic and acidic residues. Residues leucine 33–leucine 43 show a composition bias toward basic residues. The segment covering glutamate 51 to leucine 68 has biased composition (basic and acidic residues). Acidic residues predominate over residues aspartate 165–glycine 180.

This sequence belongs to the YihI family. As to quaternary structure, interacts with Der.

A GTPase-activating protein (GAP) that modifies Der/EngA GTPase function. May play a role in ribosome biogenesis. The polypeptide is Der GTPase-activating protein YihI (Vibrio parahaemolyticus serotype O3:K6 (strain RIMD 2210633)).